We begin with the raw amino-acid sequence, 295 residues long: Thioredoxin-related transmembrane protein 2 (295 aa).

A signal peptide spans Met1–Gly48. The Extracellular portion of the chain corresponds to Leu49 to Ala102. The chain crosses the membrane as a helical span at residues Ile103–Met125. The Thioredoxin domain occupies Leu114–Lys269. Residues Thr126–Lys295 lie on the Cytoplasmic side of the membrane. Ser211 and Ser243 each carry phosphoserine. A disordered region spans residues Lys266 to Lys295. The short motif at Lys292–Lys295 is the Di-lysine motif element.

As to quaternary structure, monomer. Homodimer; disulfide-linked. Occurs in both reduced and oxidized monomeric form. Oxidative conditions increase homodimerization. Interacts with CANX. Interacts with ATP2A2.

It localises to the endoplasmic reticulum membrane. The protein localises to the mitochondrion membrane. Endoplasmic reticulum and mitochondria-associated protein that probably functions as a regulator of cellular redox state and thereby regulates protein post-translational modification, protein folding and mitochondrial activity. Indirectly regulates neuronal proliferation, migration, and organization in the developing brain. This is Thioredoxin-related transmembrane protein 2 (Tmx2) from Rattus norvegicus (Rat).